The chain runs to 312 residues: Large ribosomal subunit protein uL10 (312 aa).

Positions 287-312 (AAAAPAAKKEEPKEESDDDMGFGLFD) are disordered.

This sequence belongs to the universal ribosomal protein uL10 family. In terms of assembly, P0 forms a pentameric complex by interaction with dimers of P1 and P2. Phosphorylated.

In terms of biological role, ribosomal protein P0 is the functional equivalent of E.coli protein L10. The sequence is that of Large ribosomal subunit protein uL10 from Caenorhabditis elegans.